The following is an 806-amino-acid chain: MSGWPRIYYKLLNLPLSILVKSKSIPADPAPELGLDTSRPIMYVLPYNSKADLLTLRAQCLAHDLPDPLDPLEIDGTLLPRYVFIHGGPRVFTYYTPKEESIKLFHDYLDLHRSNPNLDVQMVPVSVMFGRSPGREKGEVNPPLRMLNGVQKFFAVLWLGRDSFVRFSPSVSLRHMADEHGTDKTIAQKLARVARMHFARQRLAAVGPRLPARQDLFNKLLASRAIAKAVEDEARSKKISHEKAQQNAVALMEEIAANFSYEMIRLTDRILGFTWNRLYQGINVHNAERVRQLAHDGHEIVYVPCHRSHMDYLLLSYVLYHQGLVPPHIAAGINLNFWPAGPIFRRLGAFFIRRTFKGNKLYSTVFREYLGELFSRGYSVEYFVEGGRSRTGRLLDPKTGTLSMTIQAMLRGGTRPITLVPIYIGYEHVMEVGTYAKELRGATKEKENMAQMLRGLSKLRNLGQGYVNFGEPIPLMTYLNQHVPEWRESIDPIEAVRPAWLTPTVNNIAADLMVRINNAGAANAMNLCCTALLASRQRSLTREQLTEQLDCYLDLLRNVPYSPDATVPSASASELIDHALQMNKFEVEKDTIGDIIILPREQAVLMTYYRNNIAHMLVLPSLMAAIVTQHRHISREALLHHVEVLYPMLKAELFLRWDRDELPDVIDALAREMARQGLITLQNDELQINPSHSRTLQLLAAGARETLQRYAITFWLLSANPAINRSSLEKESRTVAQRLSVLHGINAPEFFDKAVFSSLVLTLRDEGYISDSGDAEPAETLKVYQMLAELITSDVRLTIESATQGE.

The short motif at 305–310 is the HXXXXD motif element; it reads CHRSHM.

This sequence belongs to the GPAT/DAPAT family.

Its subcellular location is the cell inner membrane. The catalysed reaction is sn-glycerol 3-phosphate + an acyl-CoA = a 1-acyl-sn-glycero-3-phosphate + CoA. It functions in the pathway phospholipid metabolism; CDP-diacylglycerol biosynthesis; CDP-diacylglycerol from sn-glycerol 3-phosphate: step 1/3. The polypeptide is Glycerol-3-phosphate acyltransferase (Escherichia fergusonii (strain ATCC 35469 / DSM 13698 / CCUG 18766 / IAM 14443 / JCM 21226 / LMG 7866 / NBRC 102419 / NCTC 12128 / CDC 0568-73)).